Here is a 453-residue protein sequence, read N- to C-terminus: Protein IVY1 (453 aa).

Positions 1 to 16 (MPDNNTEQLQGSPSSD) are enriched in polar residues. The tract at residues 1-20 (MPDNNTEQLQGSPSSDQRLR) is disordered. A phosphoserine mark is found at serine 59, serine 84, and serine 85. Coiled coils occupy residues 102-122 (KRDV…SNAY) and 230-257 (IRNL…KHDF). Disordered stretches follow at residues 316–340 (DGPY…EETG) and 353–453 (TSQP…SSNI). Serine 335 carries the phosphoserine modification. Positions 353–371 (TSQPSTSKTSLPKSKGSST) are enriched in low complexity. Composition is skewed to polar residues over residues 372–384 (VSTP…SSNK) and 404–429 (LMGT…TFKQ). Positions 431-442 (SIKEDNDNHSSD) are enriched in basic and acidic residues. The segment covering 443–453 (TDGMQDQSSNI) has biased composition (polar residues).

In terms of assembly, homomultimer. Interacts with YPT7 and VPS33.

It is found in the vacuole membrane. Functionally, may be required for vacuolar fusion. Overexpression leads to fragmentation of vacuoles, missorting of the vacuolar enzyme carboxypeptidase Y (CPY) to the exterior of the cell and accumulation of multivesicular bodies inside the cell. The polypeptide is Protein IVY1 (IVY1) (Saccharomyces cerevisiae (strain ATCC 204508 / S288c) (Baker's yeast)).